The sequence spans 274 residues: Large ribosomal subunit protein uL2 (274 aa).

A disordered region spans residues 223-274 (VAMNPVDHPHGGGEGRTSGGRHPVTPWGVPTKGYKTRSNKRTDKYIVRRRTK).

It belongs to the universal ribosomal protein uL2 family. As to quaternary structure, part of the 50S ribosomal subunit. Forms a bridge to the 30S subunit in the 70S ribosome.

Its function is as follows. One of the primary rRNA binding proteins. Required for association of the 30S and 50S subunits to form the 70S ribosome, for tRNA binding and peptide bond formation. It has been suggested to have peptidyltransferase activity; this is somewhat controversial. Makes several contacts with the 16S rRNA in the 70S ribosome. The sequence is that of Large ribosomal subunit protein uL2 from Shewanella amazonensis (strain ATCC BAA-1098 / SB2B).